A 152-amino-acid polypeptide reads, in one-letter code: Deoxyuridine 5'-triphosphate nucleotidohydrolase (152 aa).

Substrate-binding positions include Arg-71–Gly-73, Asn-84, Leu-88–Asp-90, and Met-98.

This sequence belongs to the dUTPase family. Requires Mg(2+) as cofactor.

It catalyses the reaction dUTP + H2O = dUMP + diphosphate + H(+). It participates in pyrimidine metabolism; dUMP biosynthesis; dUMP from dCTP (dUTP route): step 2/2. This enzyme is involved in nucleotide metabolism: it produces dUMP, the immediate precursor of thymidine nucleotides and it decreases the intracellular concentration of dUTP so that uracil cannot be incorporated into DNA. In Shewanella baltica (strain OS185), this protein is Deoxyuridine 5'-triphosphate nucleotidohydrolase.